Consider the following 100-residue polypeptide: Aspartyl/glutamyl-tRNA(Asn/Gln) amidotransferase subunit C (100 aa).

The protein belongs to the GatC family. Heterotrimer of A, B and C subunits.

It catalyses the reaction L-glutamyl-tRNA(Gln) + L-glutamine + ATP + H2O = L-glutaminyl-tRNA(Gln) + L-glutamate + ADP + phosphate + H(+). The enzyme catalyses L-aspartyl-tRNA(Asn) + L-glutamine + ATP + H2O = L-asparaginyl-tRNA(Asn) + L-glutamate + ADP + phosphate + 2 H(+). In terms of biological role, allows the formation of correctly charged Asn-tRNA(Asn) or Gln-tRNA(Gln) through the transamidation of misacylated Asp-tRNA(Asn) or Glu-tRNA(Gln) in organisms which lack either or both of asparaginyl-tRNA or glutaminyl-tRNA synthetases. The reaction takes place in the presence of glutamine and ATP through an activated phospho-Asp-tRNA(Asn) or phospho-Glu-tRNA(Gln). This is Aspartyl/glutamyl-tRNA(Asn/Gln) amidotransferase subunit C from Streptococcus thermophilus (strain ATCC BAA-491 / LMD-9).